The following is a 334-amino-acid chain: Methionyl-tRNA formyltransferase (334 aa).

(6S)-5,6,7,8-tetrahydrofolate is bound at residue 111–114 (SILP).

This sequence belongs to the Fmt family.

It carries out the reaction L-methionyl-tRNA(fMet) + (6R)-10-formyltetrahydrofolate = N-formyl-L-methionyl-tRNA(fMet) + (6S)-5,6,7,8-tetrahydrofolate + H(+). Attaches a formyl group to the free amino group of methionyl-tRNA(fMet). The formyl group appears to play a dual role in the initiator identity of N-formylmethionyl-tRNA by promoting its recognition by IF2 and preventing the misappropriation of this tRNA by the elongation apparatus. The chain is Methionyl-tRNA formyltransferase from Gloeothece citriformis (strain PCC 7424) (Cyanothece sp. (strain PCC 7424)).